The primary structure comprises 209 residues: Protein phosphotransferase ChpT (209 aa).

His22 is modified (phosphohistidine).

Belongs to the ChpT phosphotransferase family. As to quaternary structure, homodimer. Forms an asymmetric heterotetramer with CtrA (2:2). There are at least two modes of interaction between ChpT and CtrA, only one of which is competent to catalyze His-Asp phosphoryl transfer. In terms of processing, is phosphorylated by CckA-P on His-22.

It localises to the cytoplasm. Component of a regulatory phosphorelay system that controls B.abortus cell growth, division, and intracellular survival inside mammalian host cells. This signaling pathway is composed of CckA, ChpT, CtrA and CpdR. ChpT efficiently and specifically shuttles phosphoryl groups from the CckA kinase to the receiver domains of both CtrA and CpdR. Does not bind ATP. Overexpression of chpT results in a defect in cell morphology, DNA content, and intracellular survival in human macrophages. The chain is Protein phosphotransferase ChpT from Brucella abortus (strain 2308).